Reading from the N-terminus, the 180-residue chain is Large ribosomal subunit protein uL5 (180 aa).

This sequence belongs to the universal ribosomal protein uL5 family. In terms of assembly, part of the 50S ribosomal subunit; part of the 5S rRNA/L5/L18/L25 subcomplex. Contacts the 5S rRNA and the P site tRNA. Forms a bridge to the 30S subunit in the 70S ribosome.

This is one of the proteins that bind and probably mediate the attachment of the 5S RNA into the large ribosomal subunit, where it forms part of the central protuberance. In the 70S ribosome it contacts protein S13 of the 30S subunit (bridge B1b), connecting the 2 subunits; this bridge is implicated in subunit movement. Contacts the P site tRNA; the 5S rRNA and some of its associated proteins might help stabilize positioning of ribosome-bound tRNAs. This chain is Large ribosomal subunit protein uL5, found in Leuconostoc citreum (strain KM20).